A 197-amino-acid polypeptide reads, in one-letter code: MNTKNKIGIFGGSFNPPHIGHLIISQYAIEMLQLDLLYIVPTYIPPHKSNDLAPFELRFKWCKITFSGPHISISDYEKNRQGISYSLYTVLYFSQLHRTKPYFITGEDSLSYIQNWHKYRDLLENCHFVVYPRYCNKPYEEHTRSVLKELYDSIIFLQAPLIQISASDIRKRIKERKSIKGMVHPQIEKQVIEYYSL.

Belongs to the NadD family.

The catalysed reaction is nicotinate beta-D-ribonucleotide + ATP + H(+) = deamido-NAD(+) + diphosphate. It participates in cofactor biosynthesis; NAD(+) biosynthesis; deamido-NAD(+) from nicotinate D-ribonucleotide: step 1/1. In terms of biological role, catalyzes the reversible adenylation of nicotinate mononucleotide (NaMN) to nicotinic acid adenine dinucleotide (NaAD). The sequence is that of Probable nicotinate-nucleotide adenylyltransferase from Pseudothermotoga lettingae (strain ATCC BAA-301 / DSM 14385 / NBRC 107922 / TMO) (Thermotoga lettingae).